A 506-amino-acid polypeptide reads, in one-letter code: Pyruvate kinase 2 (506 aa).

Serine 24 is subject to Phosphoserine. Arginine 51 lines the substrate pocket. Asparagine 53, serine 55, aspartate 86, and threonine 87 together coordinate K(+). 53 to 56 (NFSH) is an ATP binding site. Residues arginine 93 and lysine 179 each coordinate ATP. Position 244 (glutamate 244) interacts with Mg(2+). Positions 267, 268, and 300 each coordinate substrate. Aspartate 268 serves as a coordination point for Mg(2+).

Belongs to the pyruvate kinase family. As to quaternary structure, homotetramer. Requires Mg(2+) as cofactor. The cofactor is K(+).

The enzyme catalyses pyruvate + ATP = phosphoenolpyruvate + ADP + H(+). Its pathway is carbohydrate degradation; glycolysis; pyruvate from D-glyceraldehyde 3-phosphate: step 5/5. Its activity is regulated as follows. Not activated by fructose-1,6-bisphosphate. In terms of biological role, may be used by cells under conditions in which the level of glycolytic flux is very low. This Saccharomyces cerevisiae (strain ATCC 204508 / S288c) (Baker's yeast) protein is Pyruvate kinase 2 (PYK2).